The primary structure comprises 199 residues: MSNMEKHLFNLKFAAKELNRNAKKCDKEEKAEKAKIKKAIQKGNTEVARIHAENAIRQKNQAINFLRMSARVDAVAARVQTAVTMGKVTKSMAGVVKSMDATLRSMNLEKISALMDKFEHQFETLDVQTQQMEDTMSSTTTLTTPQNQVDMLLQEMADEAGLDLNMELPQGQTGSVGASVASTEQDELSQRLARLRDQV.

Residues 15 to 47 (AKELNRNAKKCDKEEKAEKAKIKKAIQKGNTEV) are a coiled coil. The interval 132-156 (MEDTMSSTTTLTTPQNQVDMLLQEM) is interaction with IST1. The disordered stretch occupies residues 167–199 (ELPQGQTGSVGASVASTEQDELSQRLARLRDQV). Over residues 170 to 183 (QGQTGSVGASVAST) the composition is skewed to polar residues. The tract at residues 174–199 (GSVGASVASTEQDELSQRLARLRDQV) is interaction with SPAST. Residues 177–199 (GASVASTEQDELSQRLARLRDQV) adopt a coiled-coil conformation. The interval 180 to 196 (VASTEQDELSQRLARLR) is interaction with VPS4A, MITD1 and STAMBP. The tract at residues 180–199 (VASTEQDELSQRLARLRDQV) is interaction with VTA1. Positions 183–199 (TEQDELSQRLARLRDQV) are interaction with VPS4B. The short motif at 186–196 (DELSQRLARLR) is the MIT-interacting motif element.

It belongs to the SNF7 family. As to quaternary structure, probable peripherally associated component of the endosomal sorting required for transport complex III (ESCRT-III). ESCRT-III components are thought to multimerize to form a flat lattice on the perimeter membrane of the endosome. Several assembly forms of ESCRT-III may exist that interact and act sequentially. Interacts with CHMP1A. Interacts with VTA1; the interaction probably involves the open conformation of CHMP1B. Interacts with CHMP2A. Interacts with VPS4A; the interaction is direct. Interacts with VPS4B; the interaction is direct. Interacts with SPAST (via MIT domain); the interaction is direct. Interacts with IST1. Interacts with MITD1. Interacts with STAMBP.

The protein localises to the cytoplasm. The protein resides in the cytosol. Its subcellular location is the endosome. It is found in the late endosome membrane. Probable peripherally associated component of the endosomal sorting required for transport complex III (ESCRT-III) which is involved in multivesicular bodies (MVBs) formation and sorting of endosomal cargo proteins into MVBs. MVBs contain intraluminal vesicles (ILVs) that are generated by invagination and scission from the limiting membrane of the endosome and mostly are delivered to lysosomes enabling degradation of membrane proteins, such as stimulated growth factor receptors, lysosomal enzymes and lipids. The MVB pathway appears to require the sequential function of ESCRT-O, -I,-II and -III complexes. ESCRT-III proteins mostly dissociate from the invaginating membrane before the ILV is released. The ESCRT machinery also functions in topologically equivalent membrane fission events, such as the terminal stages of cytokinesis. ESCRT-III proteins are believed to mediate the necessary vesicle extrusion and/or membrane fission activities, possibly in conjunction with the AAA ATPase VPS4. Involved in cytokinesis. Involved in recruiting VPS4A and/or VPS4B and SPAST to the midbody of dividing cells. The polypeptide is Charged multivesicular body protein 1B2 (Mus musculus (Mouse)).